Reading from the N-terminus, the 353-residue chain is Uroporphyrinogen decarboxylase (353 aa).

Substrate is bound by residues 27–31 (RQAGR), phenylalanine 46, aspartate 76, tyrosine 152, serine 207, and histidine 321.

Belongs to the uroporphyrinogen decarboxylase family. In terms of assembly, homodimer.

It is found in the cytoplasm. The catalysed reaction is uroporphyrinogen III + 4 H(+) = coproporphyrinogen III + 4 CO2. Its pathway is porphyrin-containing compound metabolism; protoporphyrin-IX biosynthesis; coproporphyrinogen-III from 5-aminolevulinate: step 4/4. Its function is as follows. Catalyzes the decarboxylation of four acetate groups of uroporphyrinogen-III to yield coproporphyrinogen-III. In Listeria monocytogenes serovar 1/2a (strain ATCC BAA-679 / EGD-e), this protein is Uroporphyrinogen decarboxylase.